Consider the following 494-residue polypeptide: Alpha-amylase 2 (494 aa).

The first 18 residues, 1–18, serve as a signal peptide directing secretion; the sequence is MFLAKSIVCLALLAVANA. An intrachain disulfide couples C46 to C102. Ca(2+) is bound by residues N116, R165, and D174. The cysteines at positions 153 and 167 are disulfide-linked. R202 is a binding site for chloride. D204 (nucleophile) is an active-site residue. H208 provides a ligand contact to Ca(2+). The active-site Proton donor is E241. The chloride site is built by N304 and R343. Positions 350-370 are disordered; it reads FTDTDQGPPTTDGQNIASPSF. Over residues 351–363 the composition is skewed to low complexity; that stretch reads TDTDQGPPTTDGQ. 2 cysteine pairs are disulfide-bonded: C376–C382 and C448–C460.

This sequence belongs to the glycosyl hydrolase 13 family. In terms of assembly, monomer. It depends on Ca(2+) as a cofactor. Chloride is required as a cofactor.

The enzyme catalyses Endohydrolysis of (1-&gt;4)-alpha-D-glucosidic linkages in polysaccharides containing three or more (1-&gt;4)-alpha-linked D-glucose units.. The chain is Alpha-amylase 2 (Amy58) from Drosophila ananassae (Fruit fly).